Reading from the N-terminus, the 407-residue chain is Transcriptional regulator ICP22 homolog (407 aa).

Residues 34 to 268 form a disordered region; it reads RKRRRKLKPQ…STQPGGVPKL (235 aa). Acidic residues predominate over residues 81–241; that stretch reads EREGEGGEEG…EEAEEEEEEA (161 aa).

Belongs to the herpesviridae ICP22 family.

This is Transcriptional regulator ICP22 homolog (73) from Saimiriine herpesvirus 2 (strain 11) (SaHV-2).